Consider the following 412-residue polypeptide: Phosphoglycerate kinase (412 aa).

Substrate is bound by residues 24–26 (DLN), Arg-47, 70–73 (HLGR), Arg-130, and Arg-167. Residues Lys-217, Gly-312, Glu-343, and 369–372 (GGDS) contribute to the ATP site.

It belongs to the phosphoglycerate kinase family. In terms of assembly, monomer.

The protein localises to the cytoplasm. It catalyses the reaction (2R)-3-phosphoglycerate + ATP = (2R)-3-phospho-glyceroyl phosphate + ADP. It participates in carbohydrate degradation; glycolysis; pyruvate from D-glyceraldehyde 3-phosphate: step 2/5. In Kineococcus radiotolerans (strain ATCC BAA-149 / DSM 14245 / SRS30216), this protein is Phosphoglycerate kinase.